The following is a 189-amino-acid chain: UPF0149 protein VF_2102 (189 aa).

Belongs to the UPF0149 family.

The polypeptide is UPF0149 protein VF_2102 (Aliivibrio fischeri (strain ATCC 700601 / ES114) (Vibrio fischeri)).